The following is a 735-amino-acid chain: Peroxisomal multifunctional enzyme type 2 (735 aa).

Residues 1–305 (MASPLRFDGR…VEVLHKVDSE (305 aa)) form a (3R)-hydroxyacyl-CoA dehydrogenase region. Residues 13–37 (LVTGAGGGLGRAYALAFAERGALVI), Leu21, and Asp40 each bind NAD(+). An N6-acetyllysine; alternate modification is found at Lys46. Lys46 is modified (N6-succinyllysine; alternate). Ser52 is modified (phosphoserine). N6-succinyllysine occurs at positions 57 and 68. NAD(+) is bound at residue 75-76 (SV). Lys84 carries the post-translational modification N6-succinyllysine. Asn99 contributes to the NAD(+) binding site. Substrate is bound at residue Ser151. Catalysis depends on Tyr164, which acts as the Proton acceptor. NAD(+)-binding positions include 164–168 (YSAAK) and 196–199 (AGSR). Phosphothreonine is present on Thr265. Lys275 is modified (N6-succinyllysine). 2 positions are modified to phosphoserine: Ser304 and Ser308. Positions 321-621 (SGFVGAVGHK…TQTPSEGGEL (301 aa)) are enoyl-CoA hydratase 2. Lys355 bears the N6-succinyllysine mark. 405–406 (HG) is a binding site for (3R)-3-hydroxydecanoyl-CoA. The residue at position 423 (Lys423) is an N6-succinyllysine. (3R)-3-hydroxydecanoyl-CoA is bound by residues Lys434, 509–514 (DWNPLH), Gly532, and Phe562. The MaoC-like domain occupies 483 to 599 (VPNRPPDAVL…HETGDVVISN (117 aa)). Lys564 carries the post-translational modification N6-acetyllysine. Residues Lys578 and Lys662 each carry the N6-succinyllysine modification. One can recognise an SCP2 domain in the interval 623–735 (SALVFGEIGR…QMILKDYAKL (113 aa)). Lys668 is modified (N6-acetyllysine). Substrate is bound at residue Gln705. Position 706 is an N6-acetyllysine (Lys706). Gln723 contributes to the substrate binding site. Lys724 carries the post-translational modification N6-succinyllysine. Positions 733-735 (AKL) match the Microbody targeting signal motif.

Belongs to the short-chain dehydrogenases/reductases (SDR) family. In terms of assembly, homodimer. As to expression, present in many tissues with highest concentrations in liver and kidney.

Its subcellular location is the peroxisome. The enzyme catalyses a (3R)-3-hydroxyacyl-CoA + NAD(+) = a 3-oxoacyl-CoA + NADH + H(+). It carries out the reaction (24R,25R)-3alpha,7alpha,12alpha,24-tetrahydroxy-5beta-cholestan-26-oyl-CoA = (24E)-3alpha,7alpha,12alpha-trihydroxy-5beta-cholest-24-en-26-oyl-CoA + H2O. It catalyses the reaction a (3R)-3-hydroxyacyl-CoA = a (2E)-enoyl-CoA + H2O. The catalysed reaction is (2E)-octenoyl-CoA + H2O = (3R)-hydroxyoctanoyl-CoA. The enzyme catalyses (3R)-hydroxyoctanoyl-CoA + NAD(+) = 3-oxooctanoyl-CoA + NADH + H(+). It carries out the reaction (3R)-hydroxyhexadecanoyl-CoA + NAD(+) = 3-oxohexadecanoyl-CoA + NADH + H(+). It catalyses the reaction (2E)-hexadecenedioyl-CoA + H2O = (3R)-hydroxyhexadecanedioyl-CoA. The catalysed reaction is (3R)-hydroxyhexadecanedioyl-CoA + NAD(+) = 3-oxohexadecanedioyl-CoA + NADH + H(+). The enzyme catalyses (3R)-hydroxyhexadecanoyl-CoA = (2E)-hexadecenoyl-CoA + H2O. It carries out the reaction (3R)-3-hydroxydecanoyl-CoA = (2E)-decenoyl-CoA + H2O. It catalyses the reaction (3R)-3-hydroxydecanoyl-CoA + NAD(+) = 3-oxodecanoyl-CoA + NADH + H(+). The catalysed reaction is (24R,25R)-3alpha,7alpha,12alpha,24-tetrahydroxy-5beta-cholestan-26-oyl-CoA + NAD(+) = 3alpha,7alpha,12alpha-trihydroxy-24-oxo-5beta-cholestan-26-oyl-CoA + NADH + H(+). It functions in the pathway lipid metabolism; fatty acid beta-oxidation. Bifunctional enzyme acting on the peroxisomal fatty acid beta-oxidation pathway. Catalyzes two of the four reactions in fatty acid degradation: hydration of 2-enoyl-CoA (trans-2-enoyl-CoA) to produce (3R)-3-hydroxyacyl-CoA, and dehydrogenation of (3R)-3-hydroxyacyl-CoA to produce 3-ketoacyl-CoA (3-oxoacyl-CoA), which is further metabolized by SCPx. Can use straight-chain and branched-chain fatty acids, as well as bile acid intermediates as substrates. The protein is Peroxisomal multifunctional enzyme type 2 of Mus musculus (Mouse).